A 202-amino-acid polypeptide reads, in one-letter code: Imidazoleglycerol-phosphate dehydratase (202 aa).

This sequence belongs to the imidazoleglycerol-phosphate dehydratase family.

The protein localises to the cytoplasm. The enzyme catalyses D-erythro-1-(imidazol-4-yl)glycerol 3-phosphate = 3-(imidazol-4-yl)-2-oxopropyl phosphate + H2O. The protein operates within amino-acid biosynthesis; L-histidine biosynthesis; L-histidine from 5-phospho-alpha-D-ribose 1-diphosphate: step 6/9. This Acinetobacter baumannii (strain AYE) protein is Imidazoleglycerol-phosphate dehydratase.